The sequence spans 192 residues: Large ribosomal subunit protein bL9 (192 aa).

The interval 173–192 is disordered; it reads ALRPEDFFDPEADGVDEDEA. Residues 179-192 are compositionally biased toward acidic residues; that stretch reads FFDPEADGVDEDEA.

Belongs to the bacterial ribosomal protein bL9 family.

Functionally, binds to the 23S rRNA. The chain is Large ribosomal subunit protein bL9 (rplI) from Rhizobium leguminosarum bv. trifolii.